The chain runs to 556 residues: Dihydroxy-acid dehydratase (556 aa).

D78 contacts Mg(2+). Residue C119 coordinates [2Fe-2S] cluster. Residues D120 and K121 each contribute to the Mg(2+) site. Residue K121 is modified to N6-carboxylysine. C195 lines the [2Fe-2S] cluster pocket. Mg(2+) is bound at residue E446. S472 serves as the catalytic Proton acceptor.

This sequence belongs to the IlvD/Edd family. Homodimer. [2Fe-2S] cluster is required as a cofactor. Mg(2+) serves as cofactor.

The enzyme catalyses (2R)-2,3-dihydroxy-3-methylbutanoate = 3-methyl-2-oxobutanoate + H2O. The catalysed reaction is (2R,3R)-2,3-dihydroxy-3-methylpentanoate = (S)-3-methyl-2-oxopentanoate + H2O. Its pathway is amino-acid biosynthesis; L-isoleucine biosynthesis; L-isoleucine from 2-oxobutanoate: step 3/4. It participates in amino-acid biosynthesis; L-valine biosynthesis; L-valine from pyruvate: step 3/4. Functions in the biosynthesis of branched-chain amino acids. Catalyzes the dehydration of (2R,3R)-2,3-dihydroxy-3-methylpentanoate (2,3-dihydroxy-3-methylvalerate) into 2-oxo-3-methylpentanoate (2-oxo-3-methylvalerate) and of (2R)-2,3-dihydroxy-3-methylbutanoate (2,3-dihydroxyisovalerate) into 2-oxo-3-methylbutanoate (2-oxoisovalerate), the penultimate precursor to L-isoleucine and L-valine, respectively. The polypeptide is Dihydroxy-acid dehydratase (Desulfatibacillum aliphaticivorans).